The following is an 81-amino-acid chain: Photosystem I iron-sulfur center (81 aa).

4Fe-4S ferredoxin-type domains lie at 2-31 (SHTV…MVPW) and 39-68 (IASA…VRVY). Residues Cys-11, Cys-14, Cys-17, Cys-21, Cys-48, Cys-51, Cys-54, and Cys-58 each contribute to the [4Fe-4S] cluster site.

In terms of assembly, the eukaryotic PSI reaction center is composed of at least 11 subunits. [4Fe-4S] cluster is required as a cofactor.

It localises to the plastid. It is found in the chloroplast thylakoid membrane. The catalysed reaction is reduced [plastocyanin] + hnu + oxidized [2Fe-2S]-[ferredoxin] = oxidized [plastocyanin] + reduced [2Fe-2S]-[ferredoxin]. Its function is as follows. Apoprotein for the two 4Fe-4S centers FA and FB of photosystem I (PSI); essential for photochemical activity. FB is the terminal electron acceptor of PSI, donating electrons to ferredoxin. The C-terminus interacts with PsaA/B/D and helps assemble the protein into the PSI complex. Required for binding of PsaD and PsaE to PSI. PSI is a plastocyanin/cytochrome c6-ferredoxin oxidoreductase, converting photonic excitation into a charge separation, which transfers an electron from the donor P700 chlorophyll pair to the spectroscopically characterized acceptors A0, A1, FX, FA and FB in turn. This chain is Photosystem I iron-sulfur center, found in Chlorella vulgaris (Green alga).